The sequence spans 1026 residues: Multidrug resistance protein MdtC (1026 aa).

Transmembrane regions (helical) follow at residues 15 to 35, 333 to 353, 360 to 380, 387 to 407, 431 to 451, 463 to 483, 528 to 548, 853 to 873, 897 to 917, 953 to 973, and 984 to 1004; these read ILIA…LPVA, EVEE…FLFL, LIPA…MYLC, LSLM…IVVL, VGFT…PLLL, FAVT…TLTP, LVGV…IAIP, LILI…LYES, LFNA…IGIV, PIMM…LSGG, and ITIV…TPVV.

It belongs to the resistance-nodulation-cell division (RND) (TC 2.A.6) family. MdtC subfamily. In terms of assembly, part of a tripartite efflux system composed of MdtA, MdtB and MdtC. MdtC forms a heteromultimer with MdtB.

The protein resides in the cell inner membrane. This chain is Multidrug resistance protein MdtC, found in Salmonella enteritidis PT4 (strain P125109).